The primary structure comprises 518 residues: Protein CYCLOPS (518 aa).

The disordered stretch occupies residues 401–451 (DKKRKSLERYGSITSAVSDDKGDTTKKRRVERSRKMAEAKERNSTPSVPSD). Short sequence motifs (nuclear localization signal) lie at residues 402 to 405 (KKRK) and 426 to 429 (KKRR). Positions 433 to 443 (SRKMAEAKERN) are enriched in basic and acidic residues. Residues 452–518 (MQAVLKRCEN…ERILSETEKM (67 aa)) are a coiled coil.

This sequence belongs to the CYCLOPS family. In terms of assembly, forms homodimers. Interacts with CCAMK. Phosphorylated at the N-terminus by CCAMK. In terms of tissue distribution, expressed in roots.

The protein localises to the nucleus. Involved in symbiotic signaling. Required for root infection by symbiotic rhizobia, infection thread (IT) formation, and nodule development. Probably not involved in nodule organogenesis. Involved in arbuscular mycorrhizal (AM) symbiosis. Required for fungal infection of the outer cortical cell layers, and for arbuscule development during the AM symbiosis, by binding, as a complex comprising CCaMK, CYCLOPS, and DELLA, to RAM1 promoter cis element thus promoting its expression. Acts downstream of CCAMK. Binds to the promoter of ERN1 and strongly transactivates ERN1, a transcriptional regulator required for nodulation. The chain is Protein CYCLOPS from Lotus japonicus (Lotus corniculatus var. japonicus).